The primary structure comprises 435 residues: Cyclin-J-like protein (435 aa).

The 178-residue stretch at 14–191 (DVHCTLREKE…LLEAFSWNLC (178 aa)) folds into the Cyclin N-terminal domain. The segment at 120–142 (SSNSPASAPHPPPTPPQVAETTG) is disordered.

Belongs to the cyclin family. Cyclin J subfamily.

This is Cyclin-J-like protein (CCNJL) from Homo sapiens (Human).